Reading from the N-terminus, the 548-residue chain is Chaperonin GroEL (548 aa).

ATP-binding positions include T30–P33, K51, D87–T91, G415, and D496. The interval S527–F548 is disordered. A compositionally biased stretch (gly residues) spans G538–F548.

This sequence belongs to the chaperonin (HSP60) family. As to quaternary structure, forms a cylinder of 14 subunits composed of two heptameric rings stacked back-to-back. Interacts with the co-chaperonin GroES.

The protein localises to the cytoplasm. It carries out the reaction ATP + H2O + a folded polypeptide = ADP + phosphate + an unfolded polypeptide.. Its function is as follows. Together with its co-chaperonin GroES, plays an essential role in assisting protein folding. The GroEL-GroES system forms a nano-cage that allows encapsulation of the non-native substrate proteins and provides a physical environment optimized to promote and accelerate protein folding. This is Chaperonin GroEL from Rickettsia akari (strain Hartford).